We begin with the raw amino-acid sequence, 492 residues long: 3-octaprenyl-4-hydroxybenzoate carboxy-lyase (492 aa).

Asn177 serves as a coordination point for Mn(2+). Prenylated FMN is bound by residues 180–182 (IYR), 194–196 (RWL), and 199–200 (RG). Position 243 (Glu243) interacts with Mn(2+). Asp292 acts as the Proton donor in catalysis.

This sequence belongs to the UbiD family. As to quaternary structure, homohexamer. Prenylated FMN is required as a cofactor. The cofactor is Mn(2+).

Its subcellular location is the cell membrane. It carries out the reaction a 4-hydroxy-3-(all-trans-polyprenyl)benzoate + H(+) = a 2-(all-trans-polyprenyl)phenol + CO2. Its pathway is cofactor biosynthesis; ubiquinone biosynthesis. In terms of biological role, catalyzes the decarboxylation of 3-octaprenyl-4-hydroxy benzoate to 2-octaprenylphenol, an intermediate step in ubiquinone biosynthesis. This is 3-octaprenyl-4-hydroxybenzoate carboxy-lyase from Neisseria meningitidis serogroup A / serotype 4A (strain DSM 15465 / Z2491).